The chain runs to 320 residues: Malate dehydrogenase (320 aa).

NAD(+) is bound by residues 10-15 (GSGMIG) and D34. R83 and R89 together coordinate substrate. Residues N96 and 119-121 (ITN) each bind NAD(+). Substrate contacts are provided by N121 and R152. H176 functions as the Proton acceptor in the catalytic mechanism.

This sequence belongs to the LDH/MDH superfamily. MDH type 3 family.

The enzyme catalyses (S)-malate + NAD(+) = oxaloacetate + NADH + H(+). In terms of biological role, catalyzes the reversible oxidation of malate to oxaloacetate. The polypeptide is Malate dehydrogenase (Brucella melitensis biotype 1 (strain ATCC 23456 / CCUG 17765 / NCTC 10094 / 16M)).